Reading from the N-terminus, the 1011-residue chain is Poly [ADP-ribose] polymerase 1 (1011 aa).

2 consecutive PARP-type zinc fingers follow at residues 9-91 (YRAE…ETGA) and 113-203 (FAAE…PATK). Positions 21, 24, 53, 56, 125, 128, 159, and 162 each coordinate Zn(2+). The disordered stretch occupies residues 198-235 (QLPATKTEGKRKGEEVDGNVVAKKKSRKEKEKESKQEK). Short sequence motifs (nuclear localization signal) lie at residues 207-209 (KRK) and 220-225 (KKKSRK). A PADR1 zinc-binding domain is found at 224–358 (RKEKEKESKQ…CKKQDRIFPP (135 aa)). Residues 225–235 (KEKEKESKQEK) are compositionally biased toward basic and acidic residues. The zinc ribbon stretch occupies residues 289–331 (GALLPCEECKGQFVFKSDAYYCSGDITAWTKCVAKTQTPNRKD). Zn(2+) is bound by residues C294, C297, C310, and C320. The tract at residues 359–378 (EAATVNSAPPPPASAPLTET) is disordered. An automodification domain region spans residues 371 to 522 (ASAPLTETVT…PSKSEKKMKL (152 aa)). One can recognise a BRCT domain in the interval 382 to 473 (PQDKPLTNMK…KGFQELLSLH (92 aa)). Residues E403, E404, E410, E411, E432, E434, E441, E442, E453, E454, E468, E481, E485, E488, E509, E510, and E517 each carry the polyADP-ribosyl glutamic acid modification. A disordered region spans residues 496-519 (SKPANMKSAGKVKEEQGPSKSEKK). Basic and acidic residues predominate over residues 506 to 519 (KVKEEQGPSKSEKK). One can recognise a WGR domain in the interval 539–635 (SAHVFEKGGK…KNFTKYPKKF (97 aa)). One can recognise a PARP alpha-helical domain in the interval 659–776 (KSKLAKPIQD…DIEVAYSLLR (118 aa)). Residues 785 to 1011 (DPIDINYEKL…LKFNYKTSLW (227 aa)) form the PARP catalytic domain. NAD(+) is bound by residues 859-861 (HGS), G868, R875, and S901. The active-site For poly [ADP-ribose] polymerase activity is the E985.

Belongs to the ARTD/PARP family. Homodimer; PARP-type zinc-fingers from separate parp1 molecules form a dimer module that specifically recognizes DNA strand breaks. Poly-ADP-ribosylated on serine, glutamate and aspartate residues by autocatalysis. Auto-ADP-ribosylation on serine takes place following interaction with HPF1. Auto poly-ADP-ribosylation on serine residues promotes its dissociation from chromatin.

It is found in the chromosome. Its subcellular location is the nucleus. The protein resides in the nucleolus. It localises to the cytoplasm. The protein localises to the cytosol. It carries out the reaction NAD(+) + (ADP-D-ribosyl)n-acceptor = nicotinamide + (ADP-D-ribosyl)n+1-acceptor + H(+).. The catalysed reaction is L-seryl-[protein] + NAD(+) = O-(ADP-D-ribosyl)-L-seryl-[protein] + nicotinamide + H(+). It catalyses the reaction L-aspartyl-[protein] + NAD(+) = 4-O-(ADP-D-ribosyl)-L-aspartyl-[protein] + nicotinamide. The enzyme catalyses L-glutamyl-[protein] + NAD(+) = 5-O-(ADP-D-ribosyl)-L-glutamyl-[protein] + nicotinamide. It carries out the reaction L-tyrosyl-[protein] + NAD(+) = O-(ADP-D-ribosyl)-L-tyrosyl-[protein] + nicotinamide + H(+). The catalysed reaction is L-histidyl-[protein] + NAD(+) = N(tele)-(ADP-D-ribosyl)-L-histidyl-[protein] + nicotinamide + H(+). With respect to regulation, ADP-ribosyltransferase activity is regulated via an allosteric activation mechanism. In absence of activation signal, parp1 is autoinhibited by the PARP alpha-helical domain (also named HD region), which prevents effective NAD(+)-binding. Activity is highly stimulated by signals, such as DNA strand breaks. Binding to damaged DNA unfolds the PARP alpha-helical domain, relieving autoinhibition. Poly-ADP-ribosyltransferase activity is tightly regulated and parp1 is removed from damaged chromatin following initial poly-ADP-ribosylation of chromatin to avoid prolonged residence (trapping) that has cytotoxic consequences. A number of factors or post-translational modifications (auto-poly-ADP-ribosylation) promote parp1 removal from chromatin. Its function is as follows. Poly-ADP-ribosyltransferase that mediates poly-ADP-ribosylation of proteins and plays a key role in DNA repair. Mediates glutamate, aspartate, serine, histidine or tyrosine ADP-ribosylation of proteins: the ADP-D-ribosyl group of NAD(+) is transferred to the acceptor carboxyl group of target residues and further ADP-ribosyl groups are transferred to the 2'-position of the terminal adenosine moiety, building up a polymer with an average chain length of 20-30 units. Serine ADP-ribosylation of proteins constitutes the primary form of ADP-ribosylation of proteins in response to DNA damage. Specificity for the different amino acids is conferred by interacting factors, such as hpf1 and nmnat1. Following interaction with hpf1, catalyzes serine ADP-ribosylation of target proteins; hpf1 confers serine specificity by completing the parp1 active site. Also catalyzes tyrosine ADP-ribosylation of target proteins following interaction with hpf1. Following interaction with nmnat1, catalyzes glutamate and aspartate ADP-ribosylation of target proteins; nmnat1 confers glutamate and aspartate specificity. Parp1 initiates the repair of DNA breaks: recognizes and binds DNA breaks within chromatin and recruits hpf1, licensing serine ADP-ribosylation of target proteins, such as histones (H2BS6ADPr and H3S10ADPr), thereby promoting decompaction of chromatin and the recruitment of repair factors leading to the reparation of DNA strand breaks. In addition to base excision repair (BER) pathway, also involved in double-strand breaks (DSBs) repair. Mediates the poly-ADP-ribosylation of a number of proteins. In addition to proteins, also able to ADP-ribosylate DNA: catalyzes ADP-ribosylation of DNA strand break termini containing terminal phosphates and a 2'-OH group in single- and double-stranded DNA, respectively. Parp1-mediated DNA repair in neurons plays a role in sleep: senses DNA damage in neurons and promotes sleep, facilitating efficient DNA repair. In addition to DNA repair, also involved in other processes, such as transcription regulation, programmed cell death, membrane repair, adipogenesis and innate immunity. Acts as a repressor of transcription: binds to nucleosomes and modulates chromatin structure in a manner similar to histone H1, thereby altering RNA polymerase II. Acts both as a positive and negative regulator of transcription elongation, depending on the context. Poly-ADP-ribose chains generated by parp1 also play a role in poly-ADP-ribose-dependent cell death, a process named parthanatos. Also acts as a negative regulator of the cGAS-STING pathway by mediating poly-ADP-ribosylation and inactivation of cgas. Acts as a negative regulator of adipogenesis by catalyzing poly ADP-ribosylation of histone H2B on 'Glu-35' (H2BE35ADPr). The protein is Poly [ADP-ribose] polymerase 1 (PARP1) of Gallus gallus (Chicken).